The primary structure comprises 412 residues: Dihydrolipoyllysine-residue acetyltransferase component of pyruvate dehydrogenase complex (412 aa).

Residues 2 to 78 (PIKILMPVLS…PVNSLIAVLS (77 aa)) enclose the Lipoyl-binding domain. An N6-lipoyllysine modification is found at K43. Residues 132-169 (FASPLAKRLAKMGNIRLESVKGSGPHGRIVKQDILSYT) enclose the Peripheral subunit-binding (PSBD) domain. H385 is an active-site residue.

Belongs to the 2-oxoacid dehydrogenase family. Forms a 24-polypeptide structural core with octahedral symmetry. (R)-lipoate serves as cofactor.

It catalyses the reaction N(6)-[(R)-dihydrolipoyl]-L-lysyl-[protein] + acetyl-CoA = N(6)-[(R)-S(8)-acetyldihydrolipoyl]-L-lysyl-[protein] + CoA. Functionally, the pyruvate dehydrogenase complex catalyzes the overall conversion of pyruvate to acetyl-CoA and CO(2). It contains multiple copies of three enzymatic components: pyruvate dehydrogenase (E1), dihydrolipoamide acetyltransferase (E2) and lipoamide dehydrogenase (E3). This chain is Dihydrolipoyllysine-residue acetyltransferase component of pyruvate dehydrogenase complex (pdhC), found in Rickettsia felis (strain ATCC VR-1525 / URRWXCal2) (Rickettsia azadi).